Consider the following 232-residue polypeptide: Sugar fermentation stimulation protein homolog (232 aa).

The protein belongs to the SfsA family.

In Ruegeria sp. (strain TM1040) (Silicibacter sp.), this protein is Sugar fermentation stimulation protein homolog.